Consider the following 541-residue polypeptide: MNLRPEEISSVIKKQIENYKSELETVSVGTVLDVGDGIAHVYGLDEVMASELLEFPNGVYGMALNLEEDSVGCVLLGDETRVKEGDTVKRTGRVVEVPVGEELLGRIVNSLGQPLDGKGQISVDKYRPVESPAPSVVDRKPVDTPLQTGLKAIDSMIPIGRGQRELIIGDRQTGKTAIAVDTIINQKDQDVICIYVAIGQKASTVAQIAERLKEHGAMDYTVIVSASASEPAPLQYIAPYAGCAIGEYFMYEKNRDVLVVYDDLSKHAVAYRSMSLLLRRPPGREAYPGDVFYLHSRLLERAARLNEDMGGGSLTALPIIETQAGDVSAYIPTNVISITDGQIYLESELFFAGVRPAINVGISVSRVGGAAQTKAMKKVAGTLRLDLSQYRELEAFAQFGSDLDKATQRRLERGERIVEVLKQPQYTPMDMEDQVMIIYTVVNGHLDDIPVDNIERFEDEFLSYIHSNYPEIPETIKKTGDLDDETEEKLTGVIKEFKENFNVKENTLLNVEEGDTGEEENNEGHNKAEQDTEEKDTEEVV.

An ATP-binding site is contributed by 169 to 176; sequence GDRQTGKT. The disordered stretch occupies residues 506-541; sequence NTLLNVEEGDTGEEENNEGHNKAEQDTEEKDTEEVV. Composition is skewed to acidic residues over residues 512–521 and 531–541; these read EEGDTGEEEN and DTEEKDTEEVV.

It belongs to the ATPase alpha/beta chains family. F-type ATPases have 2 components, CF(1) - the catalytic core - and CF(0) - the membrane proton channel. CF(1) has five subunits: alpha(3), beta(3), gamma(1), delta(1), epsilon(1). CF(0) has three main subunits: a(1), b(2) and c(9-12). The alpha and beta chains form an alternating ring which encloses part of the gamma chain. CF(1) is attached to CF(0) by a central stalk formed by the gamma and epsilon chains, while a peripheral stalk is formed by the delta and b chains.

The protein resides in the cell inner membrane. The catalysed reaction is ATP + H2O + 4 H(+)(in) = ADP + phosphate + 5 H(+)(out). In terms of biological role, produces ATP from ADP in the presence of a proton gradient across the membrane. The alpha chain is a regulatory subunit. In Halothermothrix orenii (strain H 168 / OCM 544 / DSM 9562), this protein is ATP synthase subunit alpha.